Here is a 405-residue protein sequence, read N- to C-terminus: S-arrestin (405 aa).

At threonine 234 the chain carries Phosphothreonine.

Belongs to the arrestin family. Monomer. Homodimer. Homotetramer. Interacts with RHO (via the phosphorylated C-terminus). As to expression, detected in retina, in the proximal portion of the outer segment of rod photoreceptor cells (at protein level).

The protein localises to the cell projection. The protein resides in the cilium. It localises to the photoreceptor outer segment. Its subcellular location is the membrane. Its function is as follows. Binds to photoactivated, phosphorylated RHO and terminates RHO signaling via G-proteins by competing with G-proteins for the same binding site on RHO. May play a role in preventing light-dependent degeneration of retinal photoreceptor cells. This is S-arrestin (SAG) from Homo sapiens (Human).